The primary structure comprises 65 residues: Alpha-insect toxin BotIT1 (65 aa).

The LCN-type CS-alpha/beta domain maps to 2–64; sequence RDAYIAQNYN…VPIRIPGKCH (63 aa). 4 disulfides stabilise this stretch: Cys-12-Cys-63, Cys-16-Cys-36, Cys-22-Cys-46, and Cys-26-Cys-48.

The protein belongs to the long (4 C-C) scorpion toxin superfamily. Sodium channel inhibitor family. Alpha subfamily. In terms of tissue distribution, expressed by the venom gland.

Its subcellular location is the secreted. Alpha toxins bind voltage-independently at site-3 of sodium channels (Nav) and inhibit the inactivation of the activated channels, thereby blocking neuronal transmission. This contractive toxin is highly toxic to insects and barely toxic to mammals. The polypeptide is Alpha-insect toxin BotIT1 (Buthus occitanus tunetanus (Common European scorpion)).